The primary structure comprises 655 residues: Sphingomyelin phosphodiesterase 3 (655 aa).

At 1–10 the chain is on the cytoplasmic side; sequence MVLYTTPFPN. An intramembrane region (helical) is located at residues 11-31; it reads SCLSALHAVSWALIFPCYWLV. The Cytoplasmic segment spans residues 32–64; the sequence is DRLLASFIPTTYEKRQRADDPCCLQLFCTVLFT. 3 S-palmitoyl cysteine lipidation sites follow: Cys53, Cys54, and Cys59. Residues 65-85 constitute an intramembrane region (helical); that stretch reads PVYLALLVAALPFAFLGFIFW. The Cytoplasmic portion of the chain corresponds to 86–655; the sequence is SPLQSARRPY…LMVSAGEEEA (570 aa). Ser178 carries the post-translational modification Phosphoserine. Positions 209 to 318 are disordered; sequence VEYKGDGGRH…SGGSGEPGAN (110 aa). Basic and acidic residues-rich tracts occupy residues 211–221 and 246–255; these read YKGDGGRHPSD and GGEEGGRPQE. Ser289 carries the post-translational modification Phosphoserine. Glu362 provides a ligand contact to Mg(2+). 2 S-palmitoyl cysteine lipidation sites follow: Cys395 and Cys396. The Proton acceptor role is filled by His639.

Belongs to the neutral sphingomyelinase family. Mg(2+) is required as a cofactor. In terms of processing, palmitoylated, palmitoylation-deficient proteins are targeted for lysosomal degradation. In terms of tissue distribution, predominantly expressed in brain (at protein level).

The protein resides in the golgi apparatus membrane. It localises to the cell membrane. The catalysed reaction is a sphingomyelin + H2O = phosphocholine + an N-acylsphing-4-enine + H(+). The enzyme catalyses N-(15Z-tetracosenoyl)sphing-4-enine-1-phosphocholine + H2O = N-(15Z-tetracosenoyl)-sphing-4-enine + phosphocholine + H(+). It carries out the reaction N-(tetracosanoyl)-sphing-4-enine-1-phosphocholine + H2O = N-tetracosanoyl-sphing-4-enine + phosphocholine + H(+). It catalyses the reaction N-(hexadecanoyl)-sphing-4-enine-1-phosphocholine + H2O = N-hexadecanoylsphing-4-enine + phosphocholine + H(+). The catalysed reaction is an N-(acyl)-sphingosylphosphocholine + H2O = an N-acyl-sphingoid base + phosphocholine + H(+). The enzyme catalyses 1-hexadecanoyl-sn-glycero-3-phosphocholine + H2O = 1-hexadecanoyl-sn-glycerol + phosphocholine + H(+). It carries out the reaction 1-O-octadecyl-sn-glycero-3-phosphocholine + H2O = 1-O-octadecyl-sn-glycerol + phosphocholine + H(+). It catalyses the reaction a sphingosylphosphocholine + H2O = a sphingoid base + phosphocholine + H(+). It functions in the pathway lipid metabolism; sphingolipid metabolism. With respect to regulation, inhibited by nSMase inhibitor GW4869. Binding of anionic phospholipids (APLs) such as phosphatidylserine (PS) and phosphatidic acid (PA) increases enzymatic activity. Its function is as follows. Catalyzes the hydrolysis of sphingomyelin to form ceramide and phosphocholine. Ceramide mediates numerous cellular functions, such as apoptosis and growth arrest, and is capable of regulating these 2 cellular events independently. Also hydrolyzes sphingosylphosphocholine. Regulates the cell cycle by acting as a growth suppressor in confluent cells. Probably acts as a regulator of postnatal development and participates in bone and dentin mineralization. Binds to anionic phospholipids (APLs) such as phosphatidylserine (PS) and phosphatidic acid (PA) that modulate enzymatic activity and subcellular location. May be involved in IL-1-beta-induced JNK activation in hepatocytes. May act as a mediator in transcriptional regulation of NOS2/iNOS via the NF-kappa-B activation under inflammatory conditions. The chain is Sphingomyelin phosphodiesterase 3 from Mus musculus (Mouse).